We begin with the raw amino-acid sequence, 72 residues long: Late effector protein 1 (72 aa).

The signal sequence occupies residues 1–22 (MKCYLVVVVAALCTLVAQGSVG). Residue N66 is glycosylated (N-linked (GlcNAc...) asparagine).

The protein belongs to the lep1 family. Interacts at the cell wall with secreted rep1 repellent peptides.

It is found in the secreted. The protein resides in the cell wall. Core effector contributing to spore formation and tumor formation at the host plant. Modulates surface hydrophobicity promoting cell-cell or cell-surface contacts. Lep1 and rep1 interact in aerial hyphae to form a strong hydrophobic layer. Plays a crucial role in hyphal aggregation that might be a prerequisite for strong proliferation of diploid cells and for induction of the morphological changes associated with spore formation. In Sporisorium reilianum (strain SRZ2) (Maize head smut fungus), this protein is Late effector protein 1.